We begin with the raw amino-acid sequence, 94 residues long: Co-chaperonin GroES (94 aa).

This sequence belongs to the GroES chaperonin family. As to quaternary structure, heptamer of 7 subunits arranged in a ring. Interacts with the chaperonin GroEL.

The protein resides in the cytoplasm. In terms of biological role, together with the chaperonin GroEL, plays an essential role in assisting protein folding. The GroEL-GroES system forms a nano-cage that allows encapsulation of the non-native substrate proteins and provides a physical environment optimized to promote and accelerate protein folding. GroES binds to the apical surface of the GroEL ring, thereby capping the opening of the GroEL channel. This chain is Co-chaperonin GroES, found in Bacillus licheniformis (strain ATCC 14580 / DSM 13 / JCM 2505 / CCUG 7422 / NBRC 12200 / NCIMB 9375 / NCTC 10341 / NRRL NRS-1264 / Gibson 46).